Reading from the N-terminus, the 492-residue chain is Probable cobyric acid synthase (492 aa).

A GATase cobBQ-type domain is found at 252 to 444 (PIEVNIVKFS…FHGILENFEF (193 aa)). The active-site Nucleophile is cysteine 330. The active site involves histidine 436.

It belongs to the CobB/CobQ family. CobQ subfamily.

The protein operates within cofactor biosynthesis; adenosylcobalamin biosynthesis. In terms of biological role, catalyzes amidations at positions B, D, E, and G on adenosylcobyrinic A,C-diamide. NH(2) groups are provided by glutamine, and one molecule of ATP is hydrogenolyzed for each amidation. The sequence is that of Probable cobyric acid synthase from Methanococcus maripaludis (strain C5 / ATCC BAA-1333).